We begin with the raw amino-acid sequence, 63 residues long: 2-hydroxymuconate tautomerase (63 aa).

The active-site Proton acceptor; via imino nitrogen is Pro2.

This sequence belongs to the 4-oxalocrotonate tautomerase family. In terms of assembly, homohexamer.

The enzyme catalyses (2Z,4E)-2-hydroxyhexa-2,4-dienedioate = (3E)-2-oxohex-3-enedioate. It participates in aromatic compound metabolism; salicylate degradation. Functionally, catalyzes the ketonization of 2-hydroxymuconate stereoselectively to yield 2-oxo-3-hexenedioate. This chain is 2-hydroxymuconate tautomerase (tdnL), found in Pseudomonas putida (Arthrobacter siderocapsulatus).